The chain runs to 714 residues: MDSPAILPTTRTLCPYCGVGCGLEAVASPQKSVVDAGHAHKIRGDRQHPSSQGMVCVKGATVMESMDKQRLLYPMFRSSLDQPWQQISWEAALEIVVDKIQQVKQTLGVSGLCMYASGQMQTEDYYVAQKLFKGCLGTNNFDTNSRLCMSSAVSAYSLSFGSDGPPCCYEDLEITDCAFLIGTNTADCHPIIFNRLRKHHKQNPHVKLIVVDPRCTATAEVADLHLAINPGSDITLLHGIAYLLKKWNLIDQKFIDNHTQDFEQYCQVIDHYPPEKVTQICGISLEQLETAAHYWGNAKTVLSLWSMGMNQSFQGTAKGRCLINLHLLTGQIGKPGSGPFSLTGQPNAMGGREAGGLSHLLPGYRSIKNPQHRQEVEQLWQISPGRINPEPGLSAWEMFMGLENQQVGFLWIVATNPVVSMPDLERVKKALQQSTFTIHQDAYSPTETAEYAHLLLPAAQWSEKTGTMTNSERRVTLSPAFRSPPGEARPDWEIFAEVGRRLGFENQFNFVDSAAVHREYVQLTAERLCDQSGVSYEKLQKLGPLQWPCRQSDQESQLLSTKRLYTDYKFCTENGRANFCLDHSRGLAEPVDPNYPFVLTNGRLYGHWHTQTRTGHIEKIKKMHPKPILEMHPKDAEKLGIKSQDLVAIKSRRGSAQLEVLVTRAIAPGTVFMPMHWGFLWDDNAEVNSLTHATACPISKQPELKACAVNITPV.

A 4Fe-4S Mo/W bis-MGD-type domain is found at 7-70 (LPTTRTLCPY…TVMESMDKQR (64 aa)). [4Fe-4S] cluster contacts are provided by C14, C17, C21, and C56.

This sequence belongs to the prokaryotic molybdopterin-containing oxidoreductase family. NasA/NapA/NarB subfamily. The cofactor is [4Fe-4S] cluster. Requires Mo-bis(molybdopterin guanine dinucleotide) as cofactor.

The enzyme catalyses nitrate + a quinol = a quinone + nitrite + H2O. The protein operates within nitrogen metabolism; nitrate reduction (denitrification); dinitrogen from nitrate: step 1/4. Functionally, nitrate reductase is a key enzyme involved in the first step of nitrate assimilation in plants, fungi and bacteria. This Synechocystis sp. (strain ATCC 27184 / PCC 6803 / Kazusa) protein is Nitrate reductase (narB).